Reading from the N-terminus, the 211-residue chain is uncharacterized protein (211 aa).

An N-terminal signal peptide occupies residues 1–20; the sequence is MSRVQISTVLAIDTATPAVT.

It to M.leprae ML0378.

This is an uncharacterized protein from Mycobacterium tuberculosis (strain CDC 1551 / Oshkosh).